The chain runs to 200 residues: Transgelin (200 aa).

A2 is modified (N-acetylalanine). Residues 24 to 137 (DELEDRLVEW…RTLVALGSLA (114 aa)) enclose the Calponin-homology (CH) domain. The Calponin-like repeat unit spans residues 175 to 199 (IGLQMGTNKGASQAGMSYGRPRQII).

The protein belongs to the calponin family. As to quaternary structure, monomer. In terms of tissue distribution, gizzard, uterus, intestine, esophagus, aorta, and trace amounts in brain, liver and heart.

The protein localises to the cytoplasm. Actin cross-linking/gelling protein. The sequence is that of Transgelin (TAGLN) from Gallus gallus (Chicken).